Here is a 229-residue protein sequence, read N- to C-terminus: Sperm flagellar protein 1 (229 aa).

A Calponin-homology (CH) domain is found at 7 to 115 (EETMQELYTW…TLRQKIEEKQ (109 aa)). The disordered stretch occupies residues 122 to 169 (ADLSQDQATQNNGNTHSDKGYKSNGTELSPRQGARVDPASKTHQGYAQ). A compositionally biased stretch (polar residues) spans 123 to 136 (DLSQDQATQNNGNT). The segment at 178–229 (RFQLAEKEQTLILSQETIQILQAKLRRLEQLLLLKNVRIDDLTRRLQELEKK) is essential for homodimerization and microtubule bundling activity.

In terms of assembly, homodimer.

The protein localises to the cytoplasm. It localises to the cytoskeleton. The protein resides in the cilium axoneme. It is found in the apical cell membrane. In terms of biological role, microtubule-associated protein involved in the stabilization of microtubules along the axis of migration during radial intercalation. Promotes the establishment and stabilization of an axis of microtubules required for the active migration of cells into the outer epithelium. Microtubule-associated protein that promotes microtubule bundling and stabilizes microtubules against depolymerization in response to cold shock. Essential for ciliary central apparatus formation which requires both its microtubule-binding and bundling activities. Regulates planar cell polarity signaling pathway and asymmetric microtubule accumulation in ciliated epithelia. In Xenopus laevis (African clawed frog), this protein is Sperm flagellar protein 1.